The chain runs to 423 residues: Elongation factor 1-alpha (423 aa).

Residues 5 to 211 (KEHINLAFIG…DNLEPPEKPT (207 aa)) form the tr-type G domain. The segment at 14–21 (GHVDHGKS) is G1. 14 to 21 (GHVDHGKS) serves as a coordination point for GTP. Residue Ser-21 participates in Mg(2+) binding. Residues 60–64 (GVTID) are G2. Residues 81 to 84 (DCPG) are G3. GTP contacts are provided by residues 81 to 85 (DCPGH) and 136 to 139 (NKMD). Positions 136-139 (NKMD) are G4. The segment at 175–177 (SAF) is G5.

The protein belongs to the TRAFAC class translation factor GTPase superfamily. Classic translation factor GTPase family. EF-Tu/EF-1A subfamily.

It localises to the cytoplasm. The enzyme catalyses GTP + H2O = GDP + phosphate + H(+). Its function is as follows. GTP hydrolase that promotes the GTP-dependent binding of aminoacyl-tRNA to the A-site of ribosomes during protein biosynthesis. The chain is Elongation factor 1-alpha from Methanopyrus kandleri (strain AV19 / DSM 6324 / JCM 9639 / NBRC 100938).